The following is a 210-amino-acid chain: Cytidylate kinase (210 aa).

7–15 (GPAASGKGT) contacts ATP.

The protein belongs to the cytidylate kinase family. Type 1 subfamily.

It is found in the cytoplasm. The catalysed reaction is CMP + ATP = CDP + ADP. It carries out the reaction dCMP + ATP = dCDP + ADP. This Methylobacterium sp. (strain 4-46) protein is Cytidylate kinase.